A 351-amino-acid polypeptide reads, in one-letter code: N-acetyl-gamma-glutamyl-phosphate reductase (351 aa).

Cys154 is a catalytic residue.

It belongs to the NAGSA dehydrogenase family. Type 1 subfamily.

Its subcellular location is the cytoplasm. It carries out the reaction N-acetyl-L-glutamate 5-semialdehyde + phosphate + NADP(+) = N-acetyl-L-glutamyl 5-phosphate + NADPH + H(+). It functions in the pathway amino-acid biosynthesis; L-arginine biosynthesis; N(2)-acetyl-L-ornithine from L-glutamate: step 3/4. Its function is as follows. Catalyzes the NADPH-dependent reduction of N-acetyl-5-glutamyl phosphate to yield N-acetyl-L-glutamate 5-semialdehyde. This Prochlorococcus marinus (strain MIT 9301) protein is N-acetyl-gamma-glutamyl-phosphate reductase.